A 382-amino-acid polypeptide reads, in one-letter code: Toluene efflux pump periplasmic linker protein TtgD (382 aa).

Positions 1–23 (MRLERALRARQLIPLAAIWLLVG) are cleaved as a signal peptide. Cysteine 24 is lipidated: N-palmitoyl cysteine. Cysteine 24 carries the S-diacylglycerol cysteine lipid modification. Positions 100 to 136 (YEALLARAEASLLTAQNLARRYERLLDTNAISQQQYD) form a coiled coil.

It belongs to the membrane fusion protein (MFP) (TC 8.A.1) family.

It localises to the cell inner membrane. Its function is as follows. The periplasmic linker protein component of an inducible organic solvent efflux pump. Involved in export of toluene and styrene but not of m-xylene, propylbenzene or ethylbenzene. Is not involved in antibiotic or AMP efflux. This is Toluene efflux pump periplasmic linker protein TtgD (ttgD) from Pseudomonas putida (strain DOT-T1E).